A 290-amino-acid chain; its full sequence is Programmed cell death 1 ligand 1 (290 aa).

The signal sequence occupies residues 1 to 18 (MRIFAGIIFTACCHLLRA). Positions 19–127 (FTITAPKDLY…YGGADYKRIT (109 aa)) constitute an Ig-like V-type domain. At 19–239 (FTITAPKDLY…ATHPPQNRTH (221 aa)) the chain is on the extracellular side. N35 carries N-linked (GlcNAc...) asparagine glycosylation. 2 cysteine pairs are disulfide-bonded: C40–C114 and C154–C208. The Ig-like C2-type domain maps to 133–224 (PYRKINQRIS…PGQNHTAELI (92 aa)). N-linked (GlcNAc...) asparagine glycans are attached at residues N191, N199, N218, and N236. The chain crosses the membrane as a helical span at residues 240-260 (WVLLGSILLFLIVVSTVLLFL). Topologically, residues 261–290 (RKQVRMLDVEKCGVEDTSSKNRNDTQFEET) are cytoplasmic.

This sequence belongs to the immunoglobulin superfamily. BTN/MOG family. In terms of assembly, interacts with PDCD1. Interacts with CMTM4 and CMTM6. Interacts with CD80. Post-translationally, ubiquitinated; STUB1 likely mediates polyubiquitination of PD-L1/CD274 triggering its degradation. Ubiquitinated by MARCHF8; leading to degradation. Deubiquitinated by USP22; leading to stabilization. Highly expressed in the heart, thymus, skeletal muscle, and lung. Weakly expressed in the kidney, spleen, thyroid, and liver. Expressed on activated dendritic cells, B-cells and macrophages. Expressed in numerous tumor cells lines of lymphoid origin.

Its subcellular location is the cell membrane. The protein resides in the early endosome membrane. It is found in the recycling endosome membrane. In terms of biological role, plays a critical role in induction and maintenance of immune tolerance to self. As a ligand for the inhibitory receptor PDCD1/PD-1, modulates the activation threshold of T-cells and limits T-cell effector response. Through a yet unknown activating receptor, may costimulate T-cell subsets that predominantly produce interleukin-10 (IL10). Functionally, the PDCD1-mediated inhibitory pathway is exploited by tumors to attenuate anti-tumor immunity and escape destruction by the immune system, thereby facilitating tumor survival. The interaction with PDCD1/PD-1 inhibits cytotoxic T lymphocytes (CTLs) effector function. The blockage of the PDCD1-mediated pathway results in the reversal of the exhausted T-cell phenotype and the normalization of the anti-tumor response, providing a rationale for cancer immunotherapy. This chain is Programmed cell death 1 ligand 1 (Cd274), found in Mus musculus (Mouse).